The primary structure comprises 427 residues: Dihydrofolate synthetase (427 aa).

Position 34–37 (34–37 (GKGS)) interacts with ATP. Mg(2+) is bound by residues Glu-123 and His-153. The ATP site is built by Arg-275 and Asp-296.

The protein belongs to the folylpolyglutamate synthase family.

The protein resides in the cytoplasm. The catalysed reaction is 7,8-dihydropteroate + L-glutamate + ATP = 7,8-dihydrofolate + ADP + phosphate + H(+). The protein operates within cofactor biosynthesis; tetrahydrofolylpolyglutamate biosynthesis. Functionally, glutamate-adding enzyme which catalyzes the binding of the first glutamyl side chain to dihydropteroate. Leads to the de nove synthesis of tetrahydrofolate. The chain is Dihydrofolate synthetase (FOL3) from Saccharomyces cerevisiae (strain ATCC 204508 / S288c) (Baker's yeast).